Reading from the N-terminus, the 119-residue chain is MITKIDKNKVRKKRHARVRSKISGTESRPRLNVFRSNKNIYAQIIDDVNGVTLASASNLDKDFGSAESKVDAASKVGELVAKRASEKGITSVTFDRGGYLYHGRVKALAEAARENGLEF.

Positions 1 to 25 are disordered; sequence MITKIDKNKVRKKRHARVRSKISGT. The segment covering 9–20 has biased composition (basic residues); the sequence is KVRKKRHARVRS.

It belongs to the universal ribosomal protein uL18 family. Part of the 50S ribosomal subunit; part of the 5S rRNA/L5/L18/L25 subcomplex. Contacts the 5S and 23S rRNAs.

Its function is as follows. This is one of the proteins that bind and probably mediate the attachment of the 5S RNA into the large ribosomal subunit, where it forms part of the central protuberance. The polypeptide is Large ribosomal subunit protein uL18 (Listeria monocytogenes serotype 4b (strain CLIP80459)).